The sequence spans 88 residues: Small ribosomal subunit protein bS20 (88 aa).

This sequence belongs to the bacterial ribosomal protein bS20 family.

Its function is as follows. Binds directly to 16S ribosomal RNA. The polypeptide is Small ribosomal subunit protein bS20 (Bacillus licheniformis (strain ATCC 14580 / DSM 13 / JCM 2505 / CCUG 7422 / NBRC 12200 / NCIMB 9375 / NCTC 10341 / NRRL NRS-1264 / Gibson 46)).